The chain runs to 449 residues: Maltose-6'-phosphate glucosidase (449 aa).

6 to 72 (FSIVIAGGGS…PDIEFAATTD (67 aa)) provides a ligand contact to NAD(+). Substrate is bound by residues R95 and N149. C171 is a Mn(2+) binding site. D172 (proton donor) is an active-site residue. H202 contacts Mn(2+). Y265 serves as the catalytic Proton acceptor. R285 lines the substrate pocket.

Belongs to the glycosyl hydrolase 4 family. In terms of assembly, homotetramer. Mn(2+) is required as a cofactor. It depends on Fe(2+) as a cofactor. The cofactor is Co(2+). Requires Ni(2+) as cofactor. NAD(+) serves as cofactor.

It carries out the reaction alpha-maltose 6'-phosphate + H2O = D-glucose 6-phosphate + D-glucose. Cellobiose-6'-phosphate and 6-phospho-beta-D-glucopyranoside are not substrates but competitive inhibitors of GlvA. Functionally, hydrolyzes maltose-6'-phosphate and trehalose-6'-phosphate. Is involved in the catabolism of alpha-glycosides accumulated via a phosphoenolpyruvate-dependent maltose phosphotransferase system (PEP-PTS). Is also able to significantly catalyze the hydrolysis of both 6-phospho-alpha- and 6-phospho-beta-glucosides containing activated leaving groups such as p-nitrophenol and does so with retention and inversion, respectively, of the substrate anomeric configuration. The protein is Maltose-6'-phosphate glucosidase (glvA) of Bacillus subtilis (strain 168).